Reading from the N-terminus, the 131-residue chain is Small ribosomal subunit protein uS11 (131 aa).

This sequence belongs to the universal ribosomal protein uS11 family. Part of the 30S ribosomal subunit. Interacts with proteins S7 and S18. Binds to IF-3.

Its function is as follows. Located on the platform of the 30S subunit, it bridges several disparate RNA helices of the 16S rRNA. Forms part of the Shine-Dalgarno cleft in the 70S ribosome. The protein is Small ribosomal subunit protein uS11 of Trichodesmium erythraeum (strain IMS101).